We begin with the raw amino-acid sequence, 149 residues long: Transcriptional repressor NrdR (149 aa).

The segment at 3–34 (CPFCSAVDTKVIDSRLVGEGSQVRRRRQCLVC) is a zinc-finger region. An ATP-cone domain is found at 49 to 139 (PRVIKSNEVR…VYRSFEDIRE (91 aa)).

The protein belongs to the NrdR family. Zn(2+) serves as cofactor.

In terms of biological role, negatively regulates transcription of bacterial ribonucleotide reductase nrd genes and operons by binding to NrdR-boxes. In Pectobacterium carotovorum subsp. carotovorum (strain PC1), this protein is Transcriptional repressor NrdR.